Reading from the N-terminus, the 759-residue chain is MGSASEQRVTLTNADKVLYPATGTTKSDIFDYYAGVAEVMLGHIAGRPATRKRWPNGVDQPAFFEKQLALSAPPWLSRATVAHRSGTTTYPIIDSATGLAWIAQQAALEVHVPQWRFVAEPGSGELNPGPATRLVFDLDPGEGVMMAQLAEVARAVRDLLADIGLVTFPVTSGSKGLHLYTPLDEPVSSRGATVLAKRVAQRLEQAMPALVTSTMTKSLRAGKVFVDWSQNSGSKTTIAPYSLRGRTHPTVAAPRTWAELDDPALRQLSYDEVLTRIARDGDLLERLDADAPVADRLTRYRRMRDASKTPEPIPTAKPVTGDGNTFVIQEHHARRPHYDFRLECDGVLVSWAVPKNLPDNTSVNHLAIHTEDHPLEYATFEGAIPSGEYGAGKVIIWDSGTYDTEKFHDDPHTGEVIVNLHGGRISGRYALIRTNGDRWLAHRLKNQKDQKVFEFDNLAPMLATHGTVAGLKASQWAFEGKWDGYRLLVEADHGAVRLRSRSGRDVTAEYPQLRALAEDLADHHVVLDGEAVVLDSSGVPSFSQMQNRGRDTRVEFWAFDLLYLDGRALLGTRYQDRRKLLETLANATSLTVPELLPGDGAQAFACSRKHGWEGVIAKRRDSRYQPGRRCASWVKDKHWNTQEVVIGGWRAGEGGRSSGVGSLLMGIPGPGGLQFAGRVGTGLSERELANLKEMLAPLHTDESPFDVPLPARDAKGITYVKPALVAEVRYSEWTPEGRLRQSSWRGLRPDKKPSEVVRE.

The tract at residues 1 to 411 (MGSASEQRVT…YDTEKFHDDP (411 aa)) is not required for ligase activity. Positions 9–261 (VTLTNADKVL…AAPRTWAELD (253 aa)) are DNA repair polymerase domain (Pol); interacts with Ku. 2 consecutive DNA-binding regions (interaction with target DNA) follow at residues 13–16 (NADK) and lysine 26. A substrate-binding site is contributed by lysine 52. DNA-binding regions (interaction with target DNA) lie at residues 53-55 (RWP), 63-67 (FFEKQ), serine 71, 83-88 (HRSGTT), and glutamine 104. Substrate contacts are provided by residues histidine 111, 137 to 139 (DLD), and 172 to 178 (SGSKGLH). Aspartate 137 is a DNA-binding region (interaction with target DNA). Mn(2+)-binding residues include aspartate 137 and aspartate 139. 2 DNA-binding regions (interaction with target DNA) span residues 215–220 (MTKSLR) and 227–235 (DWSQNSGSK). Mn(2+) is bound at residue aspartate 227. Substrate contacts are provided by glutamine 230, threonine 236, and arginine 244. Positions 297–446 (LTRYRRMRDA…DRWLAHRLKN (150 aa)) are 3-phosphoesterase domain (PE). 3 residues coordinate Mn(2+): histidine 331, histidine 337, and aspartate 339. The segment at 460–757 (PMLATHGTVA…RPDKKPSEVV (298 aa)) is ligase domain (Lig). The active-site N6-AMP-lysine intermediate; for ligase activity is the lysine 481. 2 residues coordinate Mn(2+): aspartate 483 and glutamate 613. The interval 740-759 (RQSSWRGLRPDKKPSEVVRE) is disordered. A compositionally biased stretch (basic and acidic residues) spans 747–759 (LRPDKKPSEVVRE).

It in the N-terminal section; belongs to the LigD polymerase family. In the central section; belongs to the LigD 3'-phosphoesterase family. The protein in the C-terminal section; belongs to the ATP-dependent DNA ligase family. In terms of assembly, monomer. Component of the NHEJ repair enzyme with mKu. Interacts with Ku in the absence of DSB via the Pol domain. In structures of the Pol domain with template DNA 2 Pol domains are bound to microhomologous DNA complexes to form an end-bridging complex. Probably interacts with Mycobacterium phage Omega and Corndog Ku homologs (AC Q853W0, AC Q856K7). Interacts with Sir2; may form a trimeric complex with LigD during NHEJ. It depends on Mn(2+) as a cofactor.

It carries out the reaction ATP + (deoxyribonucleotide)n-3'-hydroxyl + 5'-phospho-(deoxyribonucleotide)m = (deoxyribonucleotide)n+m + AMP + diphosphate.. Its activity is regulated as follows. The polymerase, exonuclease and ligase activities are stimulated by Ku. Polymerase activity is inhibited by EDTA. Its function is as follows. With Ku forms a non-homologous end joining (NHEJ) repair enzyme which repairs DNA double-strand breaks (DSB) with reduced fidelity. Recognizes, processes and reseals DSBs, including repairs on incompatible DSB which require 3'-resection, gap filling and ligation. Anneals the 3' overhanging strands from opposing breaks to form a gapped intermediate, which then can be extended in trans by using the termini as primers for extension of the annealed break. Binds to the recessed 5'-phosphate moiety of the downstream DNA strand forming a stable synaptic complex even when the 3'-protruding ends of the template DNA strands are not complementary. Has numerous activities; gap filling copies the template strand, and prefers a 5'-phosphate in the gap and rNTPS, DNA-directed DNA or RNA polymerase on 5'-overhangs, terminal transferase (extending ssDNA or blunt dsDNA in a non-templated fashion, preferentially with rNTPs), DNA-dependent RNA primase (synthesizes short RNAs on unprimed closed ssDNA) and 3'- to 5'-exonuclease on ssDNA. Isolated Pol domain (and presumably the holoenzyme) is able to form complexes between 2 noncompatible protruding 3'-ends DNA ends via microhomologous DNA strands, in a end-bridging function to which it adds a templated nucleotide. Minimal primer length is 2 nucleotides. The preference of the polymerase domain for rNTPs over dNTPs may be advantageous in dormant cells, where the dNTP pool is limiting. In terms of biological role, in conjunction with endogenous or Mycobacterium phage Omega Ku (AC Q853W0) can reconstitute NHEJ in Saccharomyces cerevisiae. The chain is Multifunctional non-homologous end joining DNA repair protein LigD (ligD) from Mycobacterium tuberculosis (strain ATCC 25618 / H37Rv).